Here is a 148-residue protein sequence, read N- to C-terminus: UPF0178 protein lpl0088 (148 aa).

Belongs to the UPF0178 family.

The chain is UPF0178 protein lpl0088 from Legionella pneumophila (strain Lens).